We begin with the raw amino-acid sequence, 289 residues long: ATP synthase subunit a (289 aa).

Helical transmembrane passes span 43–63, 103–123, 160–180, 193–213, 232–252, and 259–279; these read AFHVDTLGWSVALGLIFVLLF, VIAPLALTIFVWVFLMNAVDL, FSVFALIIFYSIKVKGLGGFI, IFVQALLIPVNFLLEFVTLIA, VFILIAVMFGSGLLWLSGLGV, and AVFHILIITLQAFIFMMLTIV.

This sequence belongs to the ATPase A chain family. F-type ATPases have 2 components, CF(1) - the catalytic core - and CF(0) - the membrane proton channel. CF(1) has five subunits: alpha(3), beta(3), gamma(1), delta(1), epsilon(1). CF(0) has three main subunits: a(1), b(2) and c(9-12). The alpha and beta chains form an alternating ring which encloses part of the gamma chain. CF(1) is attached to CF(0) by a central stalk formed by the gamma and epsilon chains, while a peripheral stalk is formed by the delta and b chains.

It localises to the cell inner membrane. Key component of the proton channel; it plays a direct role in the translocation of protons across the membrane. This Pseudomonas fluorescens (strain Pf0-1) protein is ATP synthase subunit a.